A 628-amino-acid polypeptide reads, in one-letter code: Probable potassium transport system protein Kup (628 aa).

A run of 12 helical transmembrane segments spans residues 15–35, 55–75, 104–124, 142–162, 173–193, 210–230, 252–272, 281–301, 342–362, 372–392, 400–420, and 426–446; these read LAIAAIGVVFGDIGTSPLYSL, VISLLFWAIVIVVGVKYVLFV, AGLLMMLGIFGACMFYGDAVI, PHLSHLVLPLTIVILILLFWI, LFGPIMVLWFVVLAALGLWHI, TFMAAHVLQAYVVLGSVVLVL, WYVLVMPSLVLNYFGQGALLM, PFFLLAPDWALLPLVVLSTIA, IYVPVVNWMLLFIILCIVIAF, YGIAVTATMVITTILACVVMV, LLVALIIGVFMTVDLGFFGAN, and EGGWLPLGIGALLFFLLMTWY.

The protein belongs to the HAK/KUP transporter (TC 2.A.72) family.

It localises to the cell inner membrane. It catalyses the reaction K(+)(in) + H(+)(in) = K(+)(out) + H(+)(out). In terms of biological role, transport of potassium into the cell. Likely operates as a K(+):H(+) symporter. The sequence is that of Probable potassium transport system protein Kup from Paraburkholderia xenovorans (strain LB400).